The sequence spans 157 residues: Protein Smg homolog (157 aa).

The protein belongs to the Smg family.

The polypeptide is Protein Smg homolog (Aliivibrio fischeri (strain ATCC 700601 / ES114) (Vibrio fischeri)).